The primary structure comprises 205 residues: Holliday junction branch migration complex subunit RuvA (205 aa).

Positions M1 to T64 are domain I. The domain II stretch occupies residues T65 to E143. Residues V144–S152 are flexible linker. Residues S153–R205 form a domain III region.

It belongs to the RuvA family. Homotetramer. Forms an RuvA(8)-RuvB(12)-Holliday junction (HJ) complex. HJ DNA is sandwiched between 2 RuvA tetramers; dsDNA enters through RuvA and exits via RuvB. An RuvB hexamer assembles on each DNA strand where it exits the tetramer. Each RuvB hexamer is contacted by two RuvA subunits (via domain III) on 2 adjacent RuvB subunits; this complex drives branch migration. In the full resolvosome a probable DNA-RuvA(4)-RuvB(12)-RuvC(2) complex forms which resolves the HJ.

The protein resides in the cytoplasm. Its function is as follows. The RuvA-RuvB-RuvC complex processes Holliday junction (HJ) DNA during genetic recombination and DNA repair, while the RuvA-RuvB complex plays an important role in the rescue of blocked DNA replication forks via replication fork reversal (RFR). RuvA specifically binds to HJ cruciform DNA, conferring on it an open structure. The RuvB hexamer acts as an ATP-dependent pump, pulling dsDNA into and through the RuvAB complex. HJ branch migration allows RuvC to scan DNA until it finds its consensus sequence, where it cleaves and resolves the cruciform DNA. The protein is Holliday junction branch migration complex subunit RuvA of Parvibaculum lavamentivorans (strain DS-1 / DSM 13023 / NCIMB 13966).